A 314-amino-acid polypeptide reads, in one-letter code: Adenosine receptor A3 (314 aa).

Over 1 to 14 (MAVNGTALLLANVT) the chain is Extracellular. Asparagine 4 and asparagine 12 each carry an N-linked (GlcNAc...) asparagine glycan. Residues 15–37 (YITVEILIGLCAIVGNVLVIWVV) form a helical membrane-spanning segment. Residues 38–48 (KLNPSLQTTTF) are Cytoplasmic-facing. The chain crosses the membrane as a helical span at residues 49 to 72 (YFIVSLALADIAVGVLVMPLAIVI). Over 73 to 84 (SLGITIQFYNCL) the chain is Extracellular. Cysteine 83 and cysteine 166 are oxidised to a cystine. A helical membrane pass occupies residues 85-106 (FMTCLLLIFTHASIMSLLAIAV). Over 107-126 (DRYLRVKLTVRYRRVTTQRR) the chain is Cytoplasmic. Residues 127-148 (IWLALGLCWLVSFLVGLTPMFG) form a helical membrane-spanning segment. Residues 149 to 177 (WNMKLTSEHQRNVTFLSCQFSSVMRMDYM) lie on the Extracellular side of the membrane. N-linked (GlcNAc...) asparagine glycosylation is present at asparagine 160. Residues 178 to 198 (VYFSFFTWILIPLVVMCAIYL) traverse the membrane as a helical segment. At 199-231 (DIFYVIRNKLNQNFSSSKETGAFYGREFKTAKS) the chain is on the cytoplasmic side. A helical transmembrane segment spans residues 232–255 (LFLVLFLFAFSWLPLSIINCITYF). Over 256–261 (HGEVPQ) the chain is Extracellular. The helical transmembrane segment at 262-284 (IILYLGILLSHANSMMNPIVYAY) threads the bilayer. Over 285 to 314 (KIKKFKETYLLIFKTYMICQSSDSLDSSTE) the chain is Cytoplasmic. Cysteine 303 carries S-palmitoyl cysteine lipidation.

It belongs to the G-protein coupled receptor 1 family.

The protein localises to the cell membrane. Its function is as follows. Receptor for adenosine. The activity of this receptor is mediated by G proteins which inhibits adenylyl cyclase. The chain is Adenosine receptor A3 (ADORA3) from Canis lupus familiaris (Dog).